A 251-amino-acid polypeptide reads, in one-letter code: MELPWLDLPFTLLTLLLATRLAYDYYGVVAATFTGSFSLQIFLFYCFARWYRHTIAARAAADADGDGGGGAVADEEAAPPVLIPLLEGRGGGGGGAGAASSLANRCFAVVFMVFVPLVIVVFERSQADVVAYALCLANILVMVVWLSPDAAADPASAAKSFLRLSDDEDEGSCSGSGHGAAEDKCCVCLAGMREAQALRDLPRCGHRFHAKCIGKWLTAHPTCPVCRTTAVPPPAPLPASGDHADDAITPV.

The next 3 membrane-spanning stretches (helical) occupy residues 28-48, 102-122, and 127-147; these read VVAATFTGSFSLQIFLFYCFA, LANRCFAVVFMVFVPLVIVVF, and ADVVAYALCLANILVMVVWLS. The RING-type; atypical zinc finger occupies 185–227; that stretch reads CCVCLAGMREAQALRDLPRCGHRFHAKCIGKWLTAHPTCPVCR.

It localises to the membrane. The catalysed reaction is S-ubiquitinyl-[E2 ubiquitin-conjugating enzyme]-L-cysteine + [acceptor protein]-L-lysine = [E2 ubiquitin-conjugating enzyme]-L-cysteine + N(6)-ubiquitinyl-[acceptor protein]-L-lysine.. It functions in the pathway protein modification; protein ubiquitination. Its function is as follows. Possesses E3 ubiquitin-protein ligase in vitro. The protein is E3 ubiquitin-protein ligase Os06g0535400 of Oryza sativa subsp. japonica (Rice).